The primary structure comprises 213 residues: Probable transaldolase (213 aa).

The active-site Schiff-base intermediate with substrate is Lys-83.

Belongs to the transaldolase family. Type 3B subfamily.

It localises to the cytoplasm. The enzyme catalyses D-sedoheptulose 7-phosphate + D-glyceraldehyde 3-phosphate = D-erythrose 4-phosphate + beta-D-fructose 6-phosphate. Its pathway is carbohydrate degradation; pentose phosphate pathway; D-glyceraldehyde 3-phosphate and beta-D-fructose 6-phosphate from D-ribose 5-phosphate and D-xylulose 5-phosphate (non-oxidative stage): step 2/3. Its function is as follows. Transaldolase is important for the balance of metabolites in the pentose-phosphate pathway. The chain is Probable transaldolase from Geobacillus thermodenitrificans (strain NG80-2).